Reading from the N-terminus, the 711-residue chain is Hepatocyte growth factor-like protein (711 aa).

An N-terminal signal peptide occupies residues 1–18 (MGWLPLLLLLTQCLGVPG). The 85-residue stretch at 21–105 (SPLNDFQVLR…GRCDLFQKKD (85 aa)) folds into the PAN domain. 20 cysteine pairs are disulfide-bonded: C56/C78, C60/C66, C110/C186, C131/C169, C157/C181, C191/C268, C194/C324, C212/C251, C240/C263, C283/C361, C304/C343, C332/C355, C370/C448, C391/C431, C419/C443, C468/C588, C507/C523, C602/C667, C632/C646, and C657/C685. N-linked (GlcNAc...) asparagine glycosylation occurs at N72. Kringle domains lie at 110–186 (CIMN…IKSC), 191–268 (CVWC…LPRC), 283–361 (CFRG…IRRC), and 370–448 (CYHG…LRRC). N296 carries N-linked (GlcNAc...) asparagine glycosylation. One can recognise a Peptidase S1 domain in the interval 484–709 (VVGGHPGNSP…FVDWIHKVMR (226 aa)). A glycan (N-linked (GlcNAc...) asparagine) is linked at N615.

This sequence belongs to the peptidase S1 family. Plasminogen subfamily. Dimer of an alpha chain and a beta chain linked by a disulfide bond. Interacts (via beta chain) with MST1R (via SEMA domain). Post-translationally, cleaved after Arg-483, probably by HPN/Hepsin, to yield the active form consisting of two disulfide-linked chains.

The protein resides in the secreted. In Homo sapiens (Human), this protein is Hepatocyte growth factor-like protein (MST1).